The primary structure comprises 302 residues: Homoserine O-acetyltransferase (302 aa).

Cys142 acts as the Acyl-thioester intermediate in catalysis. Residues Lys163 and Ser192 each contribute to the substrate site. Residue His235 is the Proton acceptor of the active site. The active site involves Glu237. Arg249 lines the substrate pocket.

The protein belongs to the MetA family.

It is found in the cytoplasm. It carries out the reaction L-homoserine + acetyl-CoA = O-acetyl-L-homoserine + CoA. It functions in the pathway amino-acid biosynthesis; L-methionine biosynthesis via de novo pathway; O-acetyl-L-homoserine from L-homoserine: step 1/1. Functionally, transfers an acetyl group from acetyl-CoA to L-homoserine, forming acetyl-L-homoserine. This Clostridium novyi (strain NT) protein is Homoserine O-acetyltransferase.